We begin with the raw amino-acid sequence, 540 residues long: Chaperonin GroEL (540 aa).

Residues 29 to 32, 86 to 90, Gly-413, and Asp-495 contribute to the ATP site; these read TLGP and DGTTT.

It belongs to the chaperonin (HSP60) family. In terms of assembly, forms a cylinder of 14 subunits composed of two heptameric rings stacked back-to-back. Interacts with the co-chaperonin GroES.

The protein resides in the cytoplasm. It carries out the reaction ATP + H2O + a folded polypeptide = ADP + phosphate + an unfolded polypeptide.. Its function is as follows. Together with its co-chaperonin GroES, plays an essential role in assisting protein folding. The GroEL-GroES system forms a nano-cage that allows encapsulation of the non-native substrate proteins and provides a physical environment optimized to promote and accelerate protein folding. The sequence is that of Chaperonin GroEL from Caldanaerobacter subterraneus subsp. tengcongensis (strain DSM 15242 / JCM 11007 / NBRC 100824 / MB4) (Thermoanaerobacter tengcongensis).